The sequence spans 180 residues: GTP cyclohydrolase 1 (180 aa).

Positions 71, 74, and 142 each coordinate Zn(2+).

It belongs to the GTP cyclohydrolase I family. In terms of assembly, toroid-shaped homodecamer, composed of two pentamers of five dimers.

The catalysed reaction is GTP + H2O = 7,8-dihydroneopterin 3'-triphosphate + formate + H(+). It functions in the pathway cofactor biosynthesis; 7,8-dihydroneopterin triphosphate biosynthesis; 7,8-dihydroneopterin triphosphate from GTP: step 1/1. The sequence is that of GTP cyclohydrolase 1 (folE) from Helicobacter pylori (strain ATCC 700392 / 26695) (Campylobacter pylori).